The primary structure comprises 372 residues: N-methyl-L-tryptophan oxidase (372 aa).

4–34 is an FAD binding site; that stretch reads DLIIIGSGSVGAAAGYYATRAGLNVLMTDAH. Residue C308 is modified to S-8alpha-FAD cysteine.

It belongs to the MSOX/MTOX family. MTOX subfamily. As to quaternary structure, monomer. FAD is required as a cofactor.

It catalyses the reaction N(alpha)-methyl-L-tryptophan + O2 + H2O = L-tryptophan + formaldehyde + H2O2. Catalyzes the oxidative demethylation of N-methyl-L-tryptophan. The chain is N-methyl-L-tryptophan oxidase from Escherichia coli O157:H7.